We begin with the raw amino-acid sequence, 94 residues long: Pyrimidine/purine nucleoside phosphorylase (94 aa).

Belongs to the nucleoside phosphorylase PpnP family.

The catalysed reaction is a purine D-ribonucleoside + phosphate = a purine nucleobase + alpha-D-ribose 1-phosphate. The enzyme catalyses adenosine + phosphate = alpha-D-ribose 1-phosphate + adenine. It carries out the reaction cytidine + phosphate = cytosine + alpha-D-ribose 1-phosphate. It catalyses the reaction guanosine + phosphate = alpha-D-ribose 1-phosphate + guanine. The catalysed reaction is inosine + phosphate = alpha-D-ribose 1-phosphate + hypoxanthine. The enzyme catalyses thymidine + phosphate = 2-deoxy-alpha-D-ribose 1-phosphate + thymine. It carries out the reaction uridine + phosphate = alpha-D-ribose 1-phosphate + uracil. It catalyses the reaction xanthosine + phosphate = alpha-D-ribose 1-phosphate + xanthine. Its function is as follows. Catalyzes the phosphorolysis of diverse nucleosides, yielding D-ribose 1-phosphate and the respective free bases. Can use uridine, adenosine, guanosine, cytidine, thymidine, inosine and xanthosine as substrates. Also catalyzes the reverse reactions. The chain is Pyrimidine/purine nucleoside phosphorylase from Alcanivorax borkumensis (strain ATCC 700651 / DSM 11573 / NCIMB 13689 / SK2).